The following is a 326-amino-acid chain: Holliday junction branch migration complex subunit RuvB (326 aa).

The segment at 1–180 is large ATPase domain (RuvB-L); the sequence is MRSISCSKEY…FGIPLRLEFY (180 aa). Residues isoleucine 19, arginine 20, glycine 61, lysine 64, threonine 65, threonine 66, 127-129, arginine 170, tyrosine 180, and arginine 217 contribute to the ATP site; that span reads EDF. Threonine 65 is a binding site for Mg(2+). Residues 181–251 are small ATPAse domain (RuvB-S); sequence SFEELVDIIK…IADSALSKLG (71 aa). Residues 254–326 form a head domain (RuvB-H) region; the sequence is KMGLNKLDVD…QGKEYLSLQY (73 aa). The DNA site is built by arginine 307 and arginine 312.

It belongs to the RuvB family. As to quaternary structure, homohexamer. Forms an RuvA(8)-RuvB(12)-Holliday junction (HJ) complex. HJ DNA is sandwiched between 2 RuvA tetramers; dsDNA enters through RuvA and exits via RuvB. An RuvB hexamer assembles on each DNA strand where it exits the tetramer. Each RuvB hexamer is contacted by two RuvA subunits (via domain III) on 2 adjacent RuvB subunits; this complex drives branch migration. In the full resolvosome a probable DNA-RuvA(4)-RuvB(12)-RuvC(2) complex forms which resolves the HJ.

It localises to the cytoplasm. It catalyses the reaction ATP + H2O = ADP + phosphate + H(+). Functionally, the RuvA-RuvB-RuvC complex processes Holliday junction (HJ) DNA during genetic recombination and DNA repair, while the RuvA-RuvB complex plays an important role in the rescue of blocked DNA replication forks via replication fork reversal (RFR). RuvA specifically binds to HJ cruciform DNA, conferring on it an open structure. The RuvB hexamer acts as an ATP-dependent pump, pulling dsDNA into and through the RuvAB complex. RuvB forms 2 homohexamers on either side of HJ DNA bound by 1 or 2 RuvA tetramers; 4 subunits per hexamer contact DNA at a time. Coordinated motions by a converter formed by DNA-disengaged RuvB subunits stimulates ATP hydrolysis and nucleotide exchange. Immobilization of the converter enables RuvB to convert the ATP-contained energy into a lever motion, pulling 2 nucleotides of DNA out of the RuvA tetramer per ATP hydrolyzed, thus driving DNA branch migration. The RuvB motors rotate together with the DNA substrate, which together with the progressing nucleotide cycle form the mechanistic basis for DNA recombination by continuous HJ branch migration. Branch migration allows RuvC to scan DNA until it finds its consensus sequence, where it cleaves and resolves cruciform DNA. The protein is Holliday junction branch migration complex subunit RuvB of Wolbachia sp. subsp. Brugia malayi (strain TRS).